Consider the following 364-residue polypeptide: MTQSNPFQQYGITSGLAAAAAAKASVLAAMGTISDYVGVPTPIGLRIEVKVEMMKQIDARSGIAAVRKFSGDNPDTLNGALFESRAVIRDDGLINIFAGEGIGVAVSDGLPVRRGDPAINPVARMMIENAVREVSGSAGFDVYISVPGGEDLARDTMNPRVGISGGISILGTTGIEEPVSGPDYEAHIEYLLQTGRCVSTVAVMCPGNTAMRFAESYLRLHPASFILTGDRIGSAIEMAIEKGYREIVVFGLPGKLVKMAAGVMNTHSRIADARFETIAAYAALNGADRDTISKILSSNTVESAFAVLRSIGLLDSVAGAIASRIVERLRSPVWQIRRILLRHDRFRRQAIRVSPVAGHIETGE.

The protein belongs to the CbiD family.

It carries out the reaction Co-precorrin-5B + S-adenosyl-L-methionine = Co-precorrin-6A + S-adenosyl-L-homocysteine. The protein operates within cofactor biosynthesis; adenosylcobalamin biosynthesis; cob(II)yrinate a,c-diamide from sirohydrochlorin (anaerobic route): step 6/10. Catalyzes the methylation of C-1 in cobalt-precorrin-5B to form cobalt-precorrin-6A. In Thermoplasma acidophilum (strain ATCC 25905 / DSM 1728 / JCM 9062 / NBRC 15155 / AMRC-C165), this protein is Cobalt-precorrin-5B C(1)-methyltransferase.